Reading from the N-terminus, the 146-residue chain is Ribonuclease H (146 aa).

In terms of domain architecture, RNase H type-1 spans 1–143; it reads MEKKVTIYTD…CDELARLAVR (143 aa). Mg(2+) contacts are provided by D10, E48, D70, and D135.

Belongs to the RNase H family. In terms of assembly, monomer. It depends on Mg(2+) as a cofactor.

It localises to the cytoplasm. The enzyme catalyses Endonucleolytic cleavage to 5'-phosphomonoester.. Its function is as follows. Endonuclease that specifically degrades the RNA of RNA-DNA hybrids. The polypeptide is Ribonuclease H (Chlorobium phaeovibrioides (strain DSM 265 / 1930) (Prosthecochloris vibrioformis (strain DSM 265))).